Here is a 186-residue protein sequence, read N- to C-terminus: Ribosome-recycling factor (186 aa).

Belongs to the RRF family.

It localises to the cytoplasm. In terms of biological role, responsible for the release of ribosomes from messenger RNA at the termination of protein biosynthesis. May increase the efficiency of translation by recycling ribosomes from one round of translation to another. The sequence is that of Ribosome-recycling factor from Nitratiruptor sp. (strain SB155-2).